The chain runs to 1151 residues: MESSSTPLAEYFWIAGVESVSYQDPNSQPAPAVPVESTIIEDGEPEDEWTNGGQPKTNARHSRQNSASRLSKMSLTERFSIQTLDDTDGNTKSNRSSATIRAVNPPDFSNGNDDSNGNSQNPAPSGTLGEGSMFMGDFDFDKALVKFAAEREVFLEDLTFSAGAKVQARAPMVNPRMERIRAEESDSGRLSPLRSIKGSIRRKMSFRDMNSVRKQPSNRISTSRAASIRTTRRLSNYNSVIPPPEPLNTDPDMHPLKRRFEPVLLDRYPPQEAGDEISRRGRFPDYVPMFAFPNDIQIVSSDDRPRSTWHGFTMTSDDNSKLYGITIIIWIALNADVAEDVEKKCEEWRQSHMSEEERELAASLGVRLAGERTHLSQLLAKLPTIPSGSPARERLEDEISTVEEKITLMTDMLRPLRHGAASKIEGLTAGESGLWAPRAYGILGRDAGNMSFWKEWLKAIVTPMTDGSVLRIPPSSPRVGRWQPLERYVVNLCTEAFNPLGSKTQVELGVRELRLYARKEADNEIPGSRTIDIYALFRCLSLENIVALFEYAMAESRIIFLSSHASMLHLACHALANLLYPLKWASIFIPILPARLLSALEAPCPYIVGIERRYDNIELPEDDYVLVDLDKDTIDATSQPVRLPRQARRKLMSLLQVAAPHKLRYGVATGPPPYAMESFPYDAFSTENGSLFRTSTPKSTLGKWVSQSSSGFGEADPPNEIQPPIFNAFASAHVENGKSDRPSTSKSGKTSPQSSVSPVSINFPPMPSTPVSRSDSGFALASTLREKRSGHFGEEKMRRSSSFGVDKHPPFQKPGMPFLNGHQANLSISAISVESQNSVIGGANGGYGGGYAPSTYAQSTLAASTIMPSMQIQPVRNTETTVWVEGHCFNYMPKDNTSMCTICNDLAEGDGVYRCTGCKIVSHGRCLGYCSLICPEAFHADRVRAAFVRCLASLLYTYRKYLGRPSKQQKSNGQLYAFDMDGFIKSLPHDQHDYAAMMRETQCFNEFIHDREMQPANDASIRLFDEIIMAKKARGRSGLATGLSRLSTLRASHGASTYGGFGPARGGSNSKIPAFLGDISDHIWRTASVPLPKGNFPGEYKTIVTRTPARLDRSLMREPRSIQGMPRVEPRGTRGLIRKQVPNMFGTTPPT.

Disordered regions lie at residues Y22–E130, E178–K197, and N236–P255. The span at I39–W49 shows a compositional bias: acidic residues. Residues Q64 to T99 are compositionally biased toward polar residues. Low complexity predominate over residues N104 to P122. The span at E178–S187 shows a compositional bias: basic and acidic residues. In terms of domain architecture, uDENN spans P242–L500. One can recognise a cDENN domain in the interval E524–Q656. In terms of domain architecture, dDENN spans A658–A1019. Composition is skewed to polar residues over residues S695–G711 and T744–S760. Residues S695–P809 form a disordered region. Over residues L784–R798 the composition is skewed to basic and acidic residues. The segment at G886–C934 adopts a Phorbol-ester/DAG-type zinc-finger fold.

Belongs to the EPD1 elicitor family.

It is found in the secreted. Its subcellular location is the host cell. In terms of biological role, acts as an elicitor that triggers cell death and defense responses in the host plants. This Gibberella zeae (strain ATCC MYA-4620 / CBS 123657 / FGSC 9075 / NRRL 31084 / PH-1) (Wheat head blight fungus) protein is Elicitor of plant defense protein 1.